Reading from the N-terminus, the 105-residue chain is Small ribosomal subunit protein uS10 (105 aa).

The protein belongs to the universal ribosomal protein uS10 family. In terms of assembly, part of the 30S ribosomal subunit.

Its function is as follows. Involved in the binding of tRNA to the ribosomes. This is Small ribosomal subunit protein uS10 from Acaryochloris marina (strain MBIC 11017).